Here is a 287-residue protein sequence, read N- to C-terminus: Phosphatidylserine decarboxylase proenzyme (287 aa).

Residues aspartate 90, histidine 147, and serine 252 each act as charge relay system; for autoendoproteolytic cleavage activity in the active site. Catalysis depends on serine 252, which acts as the Schiff-base intermediate with substrate; via pyruvic acid; for decarboxylase activity. Serine 252 bears the Pyruvic acid (Ser); by autocatalysis mark.

It belongs to the phosphatidylserine decarboxylase family. PSD-B subfamily. Prokaryotic type I sub-subfamily. In terms of assembly, heterodimer of a large membrane-associated beta subunit and a small pyruvoyl-containing alpha subunit. The cofactor is pyruvate. Is synthesized initially as an inactive proenzyme. Formation of the active enzyme involves a self-maturation process in which the active site pyruvoyl group is generated from an internal serine residue via an autocatalytic post-translational modification. Two non-identical subunits are generated from the proenzyme in this reaction, and the pyruvate is formed at the N-terminus of the alpha chain, which is derived from the carboxyl end of the proenzyme. The autoendoproteolytic cleavage occurs by a canonical serine protease mechanism, in which the side chain hydroxyl group of the serine supplies its oxygen atom to form the C-terminus of the beta chain, while the remainder of the serine residue undergoes an oxidative deamination to produce ammonia and the pyruvoyl prosthetic group on the alpha chain. During this reaction, the Ser that is part of the protease active site of the proenzyme becomes the pyruvoyl prosthetic group, which constitutes an essential element of the active site of the mature decarboxylase.

Its subcellular location is the cell membrane. The catalysed reaction is a 1,2-diacyl-sn-glycero-3-phospho-L-serine + H(+) = a 1,2-diacyl-sn-glycero-3-phosphoethanolamine + CO2. The protein operates within phospholipid metabolism; phosphatidylethanolamine biosynthesis; phosphatidylethanolamine from CDP-diacylglycerol: step 2/2. Functionally, catalyzes the formation of phosphatidylethanolamine (PtdEtn) from phosphatidylserine (PtdSer). In Pseudomonas putida (strain ATCC 47054 / DSM 6125 / CFBP 8728 / NCIMB 11950 / KT2440), this protein is Phosphatidylserine decarboxylase proenzyme.